Reading from the N-terminus, the 140-residue chain is Large ribosomal subunit protein uL11 (140 aa).

The protein belongs to the universal ribosomal protein uL11 family. Part of the ribosomal stalk of the 50S ribosomal subunit. Interacts with L10 and the large rRNA to form the base of the stalk. L10 forms an elongated spine to which L12 dimers bind in a sequential fashion forming a multimeric L10(L12)X complex. Post-translationally, one or more lysine residues are methylated.

Its function is as follows. Forms part of the ribosomal stalk which helps the ribosome interact with GTP-bound translation factors. The sequence is that of Large ribosomal subunit protein uL11 from Brachyspira hyodysenteriae (strain ATCC 49526 / WA1).